Reading from the N-terminus, the 412-residue chain is Phosphoglycerate kinase (412 aa).

Substrate is bound by residues 26–28 (DFN), Arg-42, 65–68 (HLGR), Arg-133, and Arg-166. ATP contacts are provided by residues Lys-217, Gly-308, Glu-339, and 368 to 371 (GGDS).

It belongs to the phosphoglycerate kinase family. In terms of assembly, monomer.

It is found in the cytoplasm. It catalyses the reaction (2R)-3-phosphoglycerate + ATP = (2R)-3-phospho-glyceroyl phosphate + ADP. The protein operates within carbohydrate degradation; glycolysis; pyruvate from D-glyceraldehyde 3-phosphate: step 2/5. This is Phosphoglycerate kinase from Synechococcus sp. (strain JA-3-3Ab) (Cyanobacteria bacterium Yellowstone A-Prime).